Reading from the N-terminus, the 273-residue chain is Putative phosphoenolpyruvate synthase regulatory protein (273 aa).

153-160 is an ADP binding site; the sequence is AVSRAGKT.

Belongs to the pyruvate, phosphate/water dikinase regulatory protein family. PSRP subfamily.

It catalyses the reaction [pyruvate, water dikinase] + ADP = [pyruvate, water dikinase]-phosphate + AMP + H(+). The enzyme catalyses [pyruvate, water dikinase]-phosphate + phosphate + H(+) = [pyruvate, water dikinase] + diphosphate. Its function is as follows. Bifunctional serine/threonine kinase and phosphorylase involved in the regulation of the phosphoenolpyruvate synthase (PEPS) by catalyzing its phosphorylation/dephosphorylation. This chain is Putative phosphoenolpyruvate synthase regulatory protein, found in Xanthomonas campestris pv. campestris (strain ATCC 33913 / DSM 3586 / NCPPB 528 / LMG 568 / P 25).